Consider the following 307-residue polypeptide: Cyclin-dependent kinase 5 activator 1 (307 aa).

Glycine 2 carries the N-myristoyl glycine lipid modification. A Phosphoserine; by CDK5 modification is found at serine 8. Residues 97-135 (TFAQPPPAQPPAPPASQLSGSQTGVSSSVKKAPHPAVSS) are disordered. Residues 100-110 (QPPPAQPPAPP) are compositionally biased toward pro residues. The segment covering 112–125 (SQLSGSQTGVSSSV) has biased composition (polar residues). Residue threonine 138 is modified to Phosphothreonine; by CDK5.

This sequence belongs to the cyclin-dependent kinase 5 activator family. In terms of assembly, heterodimer composed of a catalytic subunit CDK5 and a regulatory subunit CDK5R1 (p25) and macromolecular complex composed of at least CDK5, CDK5R1 (p35) and CDK5RAP1 or CDK5RAP2 or CDK5RAP3. Only the heterodimer shows kinase activity. Interacts with EPHA4 and NGEF; may mediate the activation of NGEF by EPHA4. Interacts with RASGRF2. The complex p35/CDK5 interacts with CLOCK. In terms of processing, the p35 form is proteolytically cleaved by calpain, giving rise to the p25 form. P35 has a 5 to 10 fold shorter half-life compared to p25. The conversion results in deregulation of the CDK5 kinase: p25/CDK5 kinase displays an increased and altered tau phosphorylation in comparison to the p35/CDK5 kinase in vivo. Post-translationally, myristoylated. A proper myristoylation signal is essential for the proper distribution of p35. Phosphorylation at Ser-8 and Thr-138 by CDK5 prevents calpain-mediated proteolysis. In terms of processing, ubiquitinated, leading to its degradation: degradation of p35 by proteasome results in down-regulation of CDK5 activity. During this process, CDK5 phosphorylates p35 and induces its ubiquitination and subsequent degradation. Ubiquitinated by the CRL2(FEM1B) complex, which recognizes the -Gly-Leu-Asp-Arg C-degron at the C-terminus, leading to its degradation. In terms of tissue distribution, brain and neuron specific.

The protein localises to the cell membrane. The protein resides in the cell projection. It localises to the neuron projection. It is found in the nucleus. Its subcellular location is the cytoplasm. The protein localises to the perinuclear region. The protein resides in the perikaryon. Its function is as follows. p35 is a neuron specific activator of CDK5. The complex p35/CDK5 is required for neurite outgrowth and cortical lamination. Involved in dendritic spine morphogenesis by mediating the EFNA1-EPHA4 signaling. Activator of TPKII. The complex p35/CDK5 participates in the regulation of the circadian clock by modulating the function of CLOCK protein: phosphorylates CLOCK at 'Thr-451' and 'Thr-461' and regulates the transcriptional activity of the CLOCK-BMAL1 heterodimer in association with altered stability and subcellular distribution. The chain is Cyclin-dependent kinase 5 activator 1 (CDK5R1) from Bos taurus (Bovine).